The following is a 137-amino-acid chain: Nucleoside diphosphate kinase (137 aa).

Positions 11, 59, 87, 93, 104, and 114 each coordinate ATP. The active-site Pros-phosphohistidine intermediate is the histidine 117.

Belongs to the NDK family. Homotetramer. It depends on Mg(2+) as a cofactor.

The protein localises to the cytoplasm. The catalysed reaction is a 2'-deoxyribonucleoside 5'-diphosphate + ATP = a 2'-deoxyribonucleoside 5'-triphosphate + ADP. It carries out the reaction a ribonucleoside 5'-diphosphate + ATP = a ribonucleoside 5'-triphosphate + ADP. Functionally, major role in the synthesis of nucleoside triphosphates other than ATP. The ATP gamma phosphate is transferred to the NDP beta phosphate via a ping-pong mechanism, using a phosphorylated active-site intermediate. The protein is Nucleoside diphosphate kinase of Frankia casuarinae (strain DSM 45818 / CECT 9043 / HFP020203 / CcI3).